The primary structure comprises 407 residues: Ameloblastin (407 aa).

An N-terminal signal peptide occupies residues 1–26 (MSASKIPLFKMKGLILFLSLVKMSLA). Pro42 carries the post-translational modification Hydroxyproline. Position 48 is a phosphoserine (Ser48). Disordered regions lie at residues 124–143 (GVQV…PGQL) and 259–304 (QNSP…ENPA).

It belongs to the ameloblastin family. Ameloblast-specific.

The protein localises to the secreted. Its subcellular location is the extracellular space. It localises to the extracellular matrix. Functionally, involved in the mineralization and structural organization of enamel. The protein is Ameloblastin (Ambn) of Mus musculus (Mouse).